Consider the following 328-residue polypeptide: Phosphatidylglycerol--prolipoprotein diacylglyceryl transferase (328 aa).

3 helical membrane passes run 15 to 35 (VIQG…ILIS), 57 to 77 (IFMF…STLV), and 106 to 126 (GMAI…TINT). A 1,2-diacyl-sn-glycero-3-phospho-(1'-sn-glycerol) is bound at residue Arg-156. Helical transmembrane passes span 242-262 (GFIF…IEYL) and 289-309 (ISMG…WIIV).

The protein belongs to the Lgt family.

Its subcellular location is the cell inner membrane. It catalyses the reaction L-cysteinyl-[prolipoprotein] + a 1,2-diacyl-sn-glycero-3-phospho-(1'-sn-glycerol) = an S-1,2-diacyl-sn-glyceryl-L-cysteinyl-[prolipoprotein] + sn-glycerol 1-phosphate + H(+). The protein operates within protein modification; lipoprotein biosynthesis (diacylglyceryl transfer). In terms of biological role, catalyzes the transfer of the diacylglyceryl group from phosphatidylglycerol to the sulfhydryl group of the N-terminal cysteine of a prolipoprotein, the first step in the formation of mature lipoproteins. In Borreliella burgdorferi (strain ATCC 35210 / DSM 4680 / CIP 102532 / B31) (Borrelia burgdorferi), this protein is Phosphatidylglycerol--prolipoprotein diacylglyceryl transferase.